Here is a 109-residue protein sequence, read N- to C-terminus: MYQLQFINLVYDTTKLTHLEQTNINLFIGNWSNHQLQKSICIRHGDDTSHNQYHILFIDTAHQRIKFSSFDNEEIIYILDYDDTQHILMQTSSKQGIGTSRPIVYERLV.

The interval 97 to 101 (IGTSR) is binds to staphopain B.

It belongs to the protease inhibitor I57 (SspC) family. Forms a stable non-covalent complex with prematurely activated/folded SspB.

The protein resides in the cytoplasm. Specifically inhibits the cysteine protease staphopain B (SspB) by blocking the active site of the enzyme. Probably required to protect cytoplasmic proteins from being degraded by prematurely activated/folded prostaphopain B. Also involved in growth capacity, viability and bacterial morphology. The chain is Staphostatin B (sspC) from Staphylococcus aureus (strain MRSA252).